Here is a 321-residue protein sequence, read N- to C-terminus: Olfactory receptor 52N2 (321 aa).

The Extracellular portion of the chain corresponds to 1 to 27; that stretch reads MSGDNSSSLTPGFFILNGVPGLEATHI. N5 is a glycosylation site (N-linked (GlcNAc...) asparagine). Residues 28-48 traverse the membrane as a helical segment; that stretch reads WISLPFCFMYIIAVVGNCGLI. Residues 49-56 lie on the Cytoplasmic side of the membrane; the sequence is CLISHEEA. Residues 57–77 form a helical membrane-spanning segment; that stretch reads LHRPMYYFLALLSFTDVTLCT. At 78 to 101 the chain is on the extracellular side; it reads TMVPNMLCIFWFNLKEIDFNACLA. A disulfide bond links C99 and C191. The helical transmembrane segment at 102–122 threads the bilayer; sequence QMFFVHMLTGMESGVLMLMAL. Residues 123–141 lie on the Cytoplasmic side of the membrane; sequence DRYVAICYPLRYATILTNP. A helical transmembrane segment spans residues 142-162; it reads VIAKAGLATFLRNVMLIIPFT. Residues 163–198 lie on the Extracellular side of the membrane; that stretch reads LLTKRLPYCRGNFIPHTYCDHMSVAKVSCGNFKVNA. The helical transmembrane segment at 199-219 threads the bilayer; sequence IYGLMVALLIGVFDICCISVS. The Cytoplasmic segment spans residues 220–239; that stretch reads YTMILQAVMSLSSADARHKA. Residues 240–260 traverse the membrane as a helical segment; the sequence is FSTCTSHMCSIVITYVAAFFT. The Extracellular segment spans residues 261 to 276; that stretch reads FFTHRFVGHNIPNHIH. A helical membrane pass occupies residues 277–297; that stretch reads IIVANLYLLLPPTMNPIVYGV. The Cytoplasmic portion of the chain corresponds to 298–321; the sequence is KTKQIQEGVIKFLLGDKVSFTYDK.

The protein belongs to the G-protein coupled receptor 1 family.

Its subcellular location is the cell membrane. In terms of biological role, odorant receptor. The polypeptide is Olfactory receptor 52N2 (OR52N2) (Homo sapiens (Human)).